A 177-amino-acid chain; its full sequence is Large ribosomal subunit protein uL6 (177 aa).

This sequence belongs to the universal ribosomal protein uL6 family. As to quaternary structure, part of the 50S ribosomal subunit.

This protein binds to the 23S rRNA, and is important in its secondary structure. It is located near the subunit interface in the base of the L7/L12 stalk, and near the tRNA binding site of the peptidyltransferase center. This Rickettsia prowazekii (strain Madrid E) protein is Large ribosomal subunit protein uL6.